Here is a 165-residue protein sequence, read N- to C-terminus: Peptidyl-prolyl cis-trans isomerase-like 1 (165 aa).

The PPIase cyclophilin-type domain occupies 3 to 157 (EREEVILDTS…IVQKILYALN (155 aa)).

This sequence belongs to the cyclophilin-type PPIase family. PPIL1 subfamily.

It catalyses the reaction [protein]-peptidylproline (omega=180) = [protein]-peptidylproline (omega=0). Functionally, PPIases accelerate the folding of proteins. It catalyzes the cis-trans isomerization of proline imidic peptide bonds in oligopeptides. The protein is Peptidyl-prolyl cis-trans isomerase-like 1 (cyp3) of Rhizopus delemar (strain RA 99-880 / ATCC MYA-4621 / FGSC 9543 / NRRL 43880) (Mucormycosis agent).